We begin with the raw amino-acid sequence, 393 residues long: Na(+)/H(+) antiporter NhaA (393 aa).

12 consecutive transmembrane segments (helical) span residues 23-43 (AGGI…NSPF), 58-78 (LSLA…LVGL), 96-116 (MLPG…FAVL), 126-146 (GWAV…SLLG), 155-175 (VFLA…IAIF), 178-198 (AEIS…LFVM), 201-221 (MGVV…FFVF), 224-244 (GVHA…KPAP), 265-285 (VAFI…FKGL), 298-318 (ILLG…WLAI), 334-354 (LYGV…IGLL), and 367-387 (IGVL…LRAA).

It belongs to the NhaA Na(+)/H(+) (TC 2.A.33) antiporter family.

The protein localises to the cell inner membrane. It carries out the reaction Na(+)(in) + 2 H(+)(out) = Na(+)(out) + 2 H(+)(in). Functionally, na(+)/H(+) antiporter that extrudes sodium in exchange for external protons. The chain is Na(+)/H(+) antiporter NhaA from Brucella suis (strain ATCC 23445 / NCTC 10510).